The chain runs to 460 residues: Phosphomethylpyrimidine synthase (460 aa).

Residues asparagine 80, methionine 109, tyrosine 138, histidine 174, 194–196 (SRG), 235–238 (DSLR), and glutamate 274 each bind substrate. Histidine 278 lines the Zn(2+) pocket. Tyrosine 301 contributes to the substrate binding site. Histidine 342 is a binding site for Zn(2+). Positions 422, 425, and 430 each coordinate [4Fe-4S] cluster.

It belongs to the ThiC family. As to quaternary structure, homodimer. [4Fe-4S] cluster is required as a cofactor.

The catalysed reaction is 5-amino-1-(5-phospho-beta-D-ribosyl)imidazole + S-adenosyl-L-methionine = 4-amino-2-methyl-5-(phosphooxymethyl)pyrimidine + CO + 5'-deoxyadenosine + formate + L-methionine + 3 H(+). It functions in the pathway cofactor biosynthesis; thiamine diphosphate biosynthesis. Functionally, catalyzes the synthesis of the hydroxymethylpyrimidine phosphate (HMP-P) moiety of thiamine from aminoimidazole ribotide (AIR) in a radical S-adenosyl-L-methionine (SAM)-dependent reaction. This is Phosphomethylpyrimidine synthase from Sulfurimonas denitrificans (strain ATCC 33889 / DSM 1251) (Thiomicrospira denitrificans (strain ATCC 33889 / DSM 1251)).